Consider the following 1217-residue polypeptide: Disease resistance protein RPS4 (1217 aa).

The TIR domain maps to 14-175 (PQHQVFINFR…EIVKAVKTAL (162 aa)). Position 23–28 (23–28 (RGADLR)) interacts with NAD(+). The tract at residues 33–34 (SH) is important for interaction with RRS1. Glu88 is a catalytic residue. Residues 211-472 (EQRLKDLEEK…FRSQDKDYVE (262 aa)) form the NB-ARC domain. 11 LRR repeats span residues 581 to 606 (MGNL…KINI), 614 to 636 (LKEV…DFNP), 637 to 659 (INLV…DKDT), 682 to 706 (AEKL…MKKM), 708 to 728 (MLAF…EMNL), 729 to 749 (ISLK…PLIS), 750 to 774 (DNIE…KLQR), 796 to 818 (LKAL…EIDI), 819 to 842 (SFLN…SVQY), 843 to 860 (LCLS…GISQ), and 861 to 887 (LSQL…NLQC). Positions 1161–1195 (TTEGVDGRVNKKKKTRMDNGRPKKKQRSGRDDNQT) are disordered. The Nuclear localization signal signature appears at 1170–1177 (NKKKKTRM).

The protein belongs to the disease resistance TIR-NB-LRR family. In terms of assembly, interacts with EDS1. Interacts with SRFR1. Interacts with RRS1.

It is found in the endomembrane system. Its subcellular location is the cytoplasm. The protein localises to the nucleus. It carries out the reaction NAD(+) + H2O = ADP-D-ribose + nicotinamide + H(+). Its function is as follows. Disease resistance (R) protein that specifically recognizes the AvrRps4 type III effector avirulence protein from P.syringae. Resistance proteins guard the plant against pathogens that contain an appropriate avirulence protein via an indirect interaction with this avirulence protein. That triggers a defense system including the hypersensitive response, which restricts the pathogen growth. Probably acts as a NAD(+) hydrolase (NADase): in response to activation, catalyzes cleavage of NAD(+) into ADP-D-ribose (ADPR) and nicotinamide; NAD(+) cleavage triggering a defense system that promotes cell death. The combined presence of both regular and alternative RPS4 transcripts with truncated open reading frames (ORFs) is necessary for function. RPS4 function is regulated at multiple levels, including gene expression, alternative splicing, and protein stability. When over-expressed, confers temperature-conditioned EDS1-dependent auto-immunity. Heterodimerization with RRS1 is required to form a functional complex to recognize AvrRps4 and PopP2. Abscisic acid deficiency enhances nuclear accumulation of RPS4 and its cell death-inducing activity. This is Disease resistance protein RPS4 from Arabidopsis thaliana (Mouse-ear cress).